Here is a 51-residue protein sequence, read N- to C-terminus: Large ribosomal subunit protein eL39 (51 aa).

Belongs to the eukaryotic ribosomal protein eL39 family.

This Thermococcus onnurineus (strain NA1) protein is Large ribosomal subunit protein eL39.